Here is a 167-residue protein sequence, read N- to C-terminus: Small ribosomal subunit protein uS5 (167 aa).

The S5 DRBM domain maps to 11–74; that stretch reads LQEKLIAVNR…EKARRNMINV (64 aa).

This sequence belongs to the universal ribosomal protein uS5 family. As to quaternary structure, part of the 30S ribosomal subunit. Contacts proteins S4 and S8.

With S4 and S12 plays an important role in translational accuracy. Functionally, located at the back of the 30S subunit body where it stabilizes the conformation of the head with respect to the body. In Klebsiella pneumoniae subsp. pneumoniae (strain ATCC 700721 / MGH 78578), this protein is Small ribosomal subunit protein uS5.